Here is a 197-residue protein sequence, read N- to C-terminus: Putative early 21.8 kDa protein (197 aa).

Its function is as follows. This protein is required for viral late gene expression. The chain is Putative early 21.8 kDa protein (DA26) from Orgyia pseudotsugata (Douglas-fir tussock moth).